Consider the following 716-residue polypeptide: Protein Hook homolog 2 (716 aa).

The required for localization to the centrosome and induction of aggresome formation stretch occupies residues 1–161 (MSVDKAELCG…ELMTKDTPDS (161 aa)). Residues 1–546 (MSVDKAELCG…LKRKLEDHLQ (546 aa)) are sufficient for interaction with microtubules. In terms of domain architecture, Calponin-homology (CH) spans 6–122 (AELCGSLLTW…KLLQLVLGCA (117 aa)). Ser-163 bears the Phosphoserine mark. Coiled coils occupy residues 188–427 (DHLQ…AQLQ) and 455–605 (AELR…VDKA). The tract at residues 533–716 (DPTLLKRKLE…ALSLRPTDKH (184 aa)) is required for localization to the centrosome and induction of aggresome formation. The sufficient for interaction with CNTRL stretch occupies residues 582–716 (DSLQKKDADL…ALSLRPTDKH (135 aa)).

This sequence belongs to the hook family. Self-associates. Component of the FTS/Hook/FHIP complex (FHF complex), composed of AKTIP/FTS, FHIP1B, and one or more members of the Hook family of proteins HOOK1, HOOK2, and HOOK3. May interact directly with AKTIP/FTS, HOOK1 and HOOK3. Associates with several subunits of the homotypic vesicular sorting complex (the HOPS complex) including VPS16 and VPS41; these interactions may be indirect. Interacts with CNTRL. Interacts with microtubules. Interacts with ZC3H14. Interacts with LRGUK (via guanylate kinase-like domain). Interacts with CCDC181. Interacts with AP4M1; the interaction is direct, mediates the interaction between FTS-Hook-FHIP (FHF) complex and AP-4 and the perinuclear distribution of AP-4. In terms of tissue distribution, expressed in brain, cerebellum, kidney, liver and heart, with highest levels in heart and kidney (at protein level).

The protein resides in the cytoplasm. The protein localises to the cytoskeleton. It is found in the microtubule organizing center. It localises to the centrosome. Its subcellular location is the golgi apparatus. The protein resides in the trans-Golgi network. Functionally, component of the FTS/Hook/FHIP complex (FHF complex). The FHF complex may function to promote vesicle trafficking and/or fusion via the homotypic vesicular protein sorting complex (the HOPS complex). Contributes to the establishment and maintenance of centrosome function. May function in the positioning or formation of aggresomes, which are pericentriolar accumulations of misfolded proteins, proteasomes and chaperones. FHF complex promotes the distribution of AP-4 complex to the perinuclear area of the cell. This Mus musculus (Mouse) protein is Protein Hook homolog 2 (Hook2).